A 333-amino-acid polypeptide reads, in one-letter code: MASSSSTSTGDGYNEPWVEKYRPSKVVDIVGNEDAVSRLQVIARDGNMPNLILSGPPGTGKTTSILALAHELLGTNYKEAVLELNASDDRGIDVVRNKIKMFAQKKVTLPPGRHKVVILDEADSMTSGAQQALRRTIEIYSNSTRFALACNTSAKIIEPIQSRCALVRFSRLSDQQILGRLLVVVAAEKVPYVPEGLEAIIFTADGDMRQALNNLQATFSGFSFVNQENVFKVCDQPHPLHVKNIVRNVLESKFDIACDGLKQLYDLGYSPTDIITTLFRIIKNYDMAEYLKLEFMKETGFAHMRICDGVGSYLQLCGLLAKLSIVRETAKAP.

Position 2 is an N-acetylalanine (A2). 55-62 (GPPGTGKT) contributes to the ATP binding site.

The protein belongs to the activator 1 small subunits family. As to quaternary structure, heterotetramer of subunits RFC2, RFC3, RFC4 and RFC5 that can form a complex with RFC1.

It is found in the nucleus. May be involved in DNA replication and thus regulate cell proliferation. The protein is Replication factor C subunit 2 (RFC2) of Arabidopsis thaliana (Mouse-ear cress).